The sequence spans 365 residues: MIYNFGAGPSVLPKEVLKKVQEELLDFEKSGMSVMEISHRSKAFQKVIDEAENDLRDLMSIPQNYKILFLQGGASSQFSMVPMNLAIGKKAYYNISGAFGEKAYDEAVKLSHFLDLMAISLGSTKKDNYNHLLKIDKSKIDEKNGAYLHLTTNNTIEGTSIFPENLPEFASLPLVADMSSNILAVDYDVSKFGLIYAGAQKNLGIAGLTIVIIREDLLNEAESLSSMMDYQILVENGSMYNTPPTFAIYVAGLVFKWVKAQGGVKKLEEMNQRKAQLLYDLIDQSDFYQNPIKNKDERSICNVVFTSPSQELDELFTQKAEEKGFKSLKGHRSVGGMRASIYNAFPLEGVVELVKFMKEFEEGYK.

Arg-40 lines the L-glutamate pocket. Pyridoxal 5'-phosphate-binding positions include 74-75 (AS), Phe-99, Thr-155, Asp-177, and Gln-200. Lys-201 bears the N6-(pyridoxal phosphate)lysine mark. Pyridoxal 5'-phosphate is bound at residue 241 to 242 (NT).

This sequence belongs to the class-V pyridoxal-phosphate-dependent aminotransferase family. SerC subfamily. As to quaternary structure, homodimer. It depends on pyridoxal 5'-phosphate as a cofactor.

It localises to the cytoplasm. It catalyses the reaction O-phospho-L-serine + 2-oxoglutarate = 3-phosphooxypyruvate + L-glutamate. It carries out the reaction 4-(phosphooxy)-L-threonine + 2-oxoglutarate = (R)-3-hydroxy-2-oxo-4-phosphooxybutanoate + L-glutamate. It participates in amino-acid biosynthesis; L-serine biosynthesis; L-serine from 3-phospho-D-glycerate: step 2/3. Functionally, catalyzes the reversible conversion of 3-phosphohydroxypyruvate to phosphoserine and of 3-hydroxy-2-oxo-4-phosphonooxybutanoate to phosphohydroxythreonine. This chain is Phosphoserine aminotransferase, found in Lactococcus lactis subsp. lactis (strain IL1403) (Streptococcus lactis).